The sequence spans 460 residues: Cysteine--tRNA ligase (460 aa).

Cys-28 contributes to the Zn(2+) binding site. The 'HIGH' region motif lies at 30–40 (MTVYDYCHLGH). Zn(2+) is bound by residues Cys-209, His-234, and Glu-238. The short motif at 266 to 270 (KMSKS) is the 'KMSKS' region element. ATP is bound at residue Lys-269.

It belongs to the class-I aminoacyl-tRNA synthetase family. As to quaternary structure, monomer. Requires Zn(2+) as cofactor.

The protein resides in the cytoplasm. The catalysed reaction is tRNA(Cys) + L-cysteine + ATP = L-cysteinyl-tRNA(Cys) + AMP + diphosphate. This chain is Cysteine--tRNA ligase, found in Pseudomonas putida (strain W619).